Consider the following 961-residue polypeptide: MDDSENNAPSTPGSPGFSTDRLPPNTTTSRGATDPSSYSDDDDDDVVGAEEAEVDPNVLPEDDGVVAAEEEEDGEDLFNDNYLDDYRRMDEQDQYESVGLDDSIEDERNLDEIMADRRAAEAELDARDVRTGAAPDRKLPRMLHDQDTDEDMSFRRPKRHRANFRPPREPRTPRSDDDGDGATPSSPGRSQRGMYSGGDVPMTDQTDDDPYEDEFDEEDEMNMYRVQGTLREWVTRDEVRRFIAKKFKEFLLTYVNPKNEQGEFEYVRLINEMVLANKCSLEIDYKQFIYIHPNIAIWLADAPQSVIEVMEEVAKNVVFDLHKNYRNIHQKIYVRITNLPVYDQIRNIRQIHLNTMIRIGGVVTRRSGVFPQLQQVKYDCSKCGTVLGPFFQNSYTEVKVGSCPECQSKGPFTINVEQTIYRNYQKLTLQESPGIVPAGRLPRYKEVILLNDLIDCARPGEEIEVTGIYTNNFDLSLNTKNGFPVFATVVEANYVAKKQDLFSAYKLTDEDKAEIEKLAKDPRIGERIVKSIAPSIYGHEDIKTAIALAMFGGQEKNVKGKHRLRGDINVLLLGDPGTAKSQFLKYVEKTGHRAVYTTGKGASAVGLTAAVHKDPVTREWTLEGGALVLADRGICLIDEFDKMNDQDRVSIHEAMEQQSISISKAGIVTSLQARCSVIAAANPIGGRYDSSKTFTQNVELTDPIISRFDVLCVVKDIVDPFTDEMLARFVVDSHARSQPKGANLEDRVPTDVEDDPLAAARQADPDILSQDMLKKYITYAKLNVFPKIHDADLDKISHVYAELRRESSHGQGVPIAVRHIESIIRMSEAHARMHLRSYVSQEDVDMAIRVLLDSFISTQKFGVQKALQKNFRKYMTYKKDYNELLLLLLRTLVKDVLHFEEIVSGPTTRLTHIEVKVEDLKNKAQEYEIYDLRPFFSSAHFRDNNFVLDEGRGIIRHPLAA.

A compositionally biased stretch (polar residues) spans 1–17 (MDDSENNAPSTPGSPGF). 2 disordered regions span residues 1 to 81 (MDDS…FNDN) and 120 to 220 (AEAE…EEDE). A compositionally biased stretch (acidic residues) spans 39–78 (SDDDDDDVVGAEEAEVDPNVLPEDDGVVAAEEEEDGEDLF). 2 stretches are compositionally biased toward basic and acidic residues: residues 120 to 146 (AEAE…LHDQ) and 166 to 176 (PPREPRTPRSD). Residues 205-220 (QTDDDPYEDEFDEEDE) are compositionally biased toward acidic residues. The C4-type zinc-finger motif lies at 380–406 (CSKCGTVLGPFFQNSYTEVKVGSCPEC). Residues 524-730 (IGERIVKSIA…FTDEMLARFV (207 aa)) enclose the MCM domain. 574 to 581 (GDPGTAKS) contributes to the ATP binding site. The Arginine finger signature appears at 706-709 (SRFD).

This sequence belongs to the MCM family. In terms of assembly, component of the minichromosome maintenance (MCM) complex, a heterotetramer composed of MCM2, MCM3, MCM4, MCM5, MCM6 and MCM7.

It localises to the nucleus. It carries out the reaction ATP + H2O = ADP + phosphate + H(+). Functionally, probable component of the MCM2-7 complex (MCM complex) that may function as a DNA helicase and which is essential to undergo a single round of replication initiation and elongation per cell cycle in eukaryotic cells. This chain is DNA replication licensing factor MCM2, found in Oryza sativa subsp. indica (Rice).